Here is a 1118-residue protein sequence, read N- to C-terminus: cGMP-specific 3',5'-cyclic phosphodiesterase (1118 aa).

The segment at 1-142 is disordered; that stretch reads MTDVSSPAGG…KASTTASQQD (142 aa). A compositionally biased stretch (low complexity) spans 18–33; sequence STTSSSSAATTSASSS. A compositionally biased stretch (polar residues) spans 34 to 45; that stretch reads KPLTNGANKTAI. Composition is skewed to low complexity over residues 46–56 and 63–72; these read STAAGGVTPGA and GAIPASSSSG. Residues 84–101 show a composition bias toward polar residues; sequence SNNNRPAVTNRSSETKLM. The segment covering 102–128 has biased composition (low complexity); the sequence is TPTGSSSSPSQSPSQTQASIQTQTSQQ. 2 GAF domains span residues 247–399 and 431–612; these read DIDV…GIGI and NLEC…GLGI. One can recognise a PDEase domain in the interval 642-965; the sequence is SQDQTEKLTQ…RNWQDLAEKV (324 aa). The active-site Proton donor is His-718. The a divalent metal cation site is built by His-722, His-758, Asp-759, and Asp-869. Disordered stretches follow at residues 1006 to 1035 and 1065 to 1118; these read QQSQHGSEDSHTPEHQRSGSRLSMKKTGAL and SHVS…CALL. Composition is skewed to basic and acidic residues over residues 1011–1022 and 1065–1075; these read GSEDSHTPEHQR and SHVSEDMDDKS. Residues 1084–1104 are compositionally biased toward low complexity; the sequence is ASGSMGRMSASSSTSSAGGQM. Over residues 1108–1118 the composition is skewed to basic residues; that stretch reads SKKRSKLCALL. Residue Cys-1115 is modified to Cysteine methyl ester. Cys-1115 is lipidated: S-farnesyl cysteine. A propeptide spans 1116–1118 (removed in mature form); the sequence is ALL.

This sequence belongs to the cyclic nucleotide phosphodiesterase family. Interacts with PrBP. Requires a divalent metal cation as cofactor. Expressed in Malpighian tubule principal cells. Also expressed in adult head.

The protein resides in the cell membrane. It carries out the reaction 3',5'-cyclic GMP + H2O = GMP + H(+). Inhibited by sildenafil and zaprinast. Its function is as follows. Hydrolyzes the second messenger cGMP, which is a key regulator of many important physiological processes. Has cAMP phosphodiesterase activity in vitro but not in vivo. Has a role regulating cGMP transport in Malpighian tubule principal cells. This chain is cGMP-specific 3',5'-cyclic phosphodiesterase (Pde6), found in Drosophila melanogaster (Fruit fly).